A 79-amino-acid polypeptide reads, in one-letter code: Small ribosomal subunit protein bS16 (79 aa).

Belongs to the bacterial ribosomal protein bS16 family.

The chain is Small ribosomal subunit protein bS16 from Hahella chejuensis (strain KCTC 2396).